The primary structure comprises 957 residues: Glycine dehydrogenase (decarboxylating) (957 aa).

Lysine 708 carries the N6-(pyridoxal phosphate)lysine modification.

The protein belongs to the GcvP family. In terms of assembly, the glycine cleavage system is composed of four proteins: P, T, L and H. The cofactor is pyridoxal 5'-phosphate.

The enzyme catalyses N(6)-[(R)-lipoyl]-L-lysyl-[glycine-cleavage complex H protein] + glycine + H(+) = N(6)-[(R)-S(8)-aminomethyldihydrolipoyl]-L-lysyl-[glycine-cleavage complex H protein] + CO2. Functionally, the glycine cleavage system catalyzes the degradation of glycine. The P protein binds the alpha-amino group of glycine through its pyridoxal phosphate cofactor; CO(2) is released and the remaining methylamine moiety is then transferred to the lipoamide cofactor of the H protein. The polypeptide is Glycine dehydrogenase (decarboxylating) (Shigella sonnei (strain Ss046)).